We begin with the raw amino-acid sequence, 691 residues long: DNA-directed RNA polymerase subunit beta' (691 aa).

Residues cysteine 69, cysteine 71, cysteine 87, and cysteine 90 each coordinate Zn(2+). Mg(2+) contacts are provided by aspartate 489, aspartate 491, and aspartate 493.

This sequence belongs to the RNA polymerase beta' chain family. RpoC1 subfamily. In terms of assembly, in plastids the minimal PEP RNA polymerase catalytic core is composed of four subunits: alpha, beta, beta', and beta''. When a (nuclear-encoded) sigma factor is associated with the core the holoenzyme is formed, which can initiate transcription. Requires Mg(2+) as cofactor. It depends on Zn(2+) as a cofactor.

Its subcellular location is the plastid. The protein localises to the chloroplast. The enzyme catalyses RNA(n) + a ribonucleoside 5'-triphosphate = RNA(n+1) + diphosphate. In terms of biological role, DNA-dependent RNA polymerase catalyzes the transcription of DNA into RNA using the four ribonucleoside triphosphates as substrates. The sequence is that of DNA-directed RNA polymerase subunit beta' from Jasminum nudiflorum (Winter jasmine).